Consider the following 374-residue polypeptide: Chaperone protein DnaJ (374 aa).

Residues 5–70 form the J domain; the sequence is DYYEVLGVER…SKRAAFDQYG (66 aa). The CR-type zinc-finger motif lies at 133 to 211; the sequence is GTTVSIRVPT…CHGEGRVEEY (79 aa). Cys-146, Cys-149, Cys-163, Cys-166, Cys-185, Cys-188, Cys-199, and Cys-202 together coordinate Zn(2+). CXXCXGXG motif repeat units lie at residues 146–153, 163–170, 185–192, and 199–206; these read CQPCDGSG, CPTCGGIG, CPRCHGQG, and CTSCHGEG.

This sequence belongs to the DnaJ family. In terms of assembly, homodimer. It depends on Zn(2+) as a cofactor.

It localises to the cytoplasm. Its function is as follows. Participates actively in the response to hyperosmotic and heat shock by preventing the aggregation of stress-denatured proteins and by disaggregating proteins, also in an autonomous, DnaK-independent fashion. Unfolded proteins bind initially to DnaJ; upon interaction with the DnaJ-bound protein, DnaK hydrolyzes its bound ATP, resulting in the formation of a stable complex. GrpE releases ADP from DnaK; ATP binding to DnaK triggers the release of the substrate protein, thus completing the reaction cycle. Several rounds of ATP-dependent interactions between DnaJ, DnaK and GrpE are required for fully efficient folding. Also involved, together with DnaK and GrpE, in the DNA replication of plasmids through activation of initiation proteins. This Pseudomonas putida (strain GB-1) protein is Chaperone protein DnaJ.